Consider the following 299-residue polypeptide: Bifunctional methyltransferase-like/endonuclease (299 aa).

Residues 1 to 80 (MLSSKLLDIN…NLIVSPMQKA (80 aa)) form a probable methylated-DNA--protein-cysteine methyltransferase-like region. The endonuclease V stretch occupies residues 81-299 (LLEKEVKIIG…GRGDSNPGRD (219 aa)). Mg(2+) contacts are provided by Asp-135 and Asn-197.

It in the N-terminal section; belongs to the MGMT family. The protein in the C-terminal section; belongs to the endonuclease V family. Mg(2+) serves as cofactor.

It localises to the cytoplasm. The catalysed reaction is Endonucleolytic cleavage at apurinic or apyrimidinic sites to products with a 5'-phosphate.. In terms of biological role, DNA repair enzyme involved in the repair of deaminated bases. Selectively cleaves double-stranded DNA at the second phosphodiester bond 3' to a deoxyinosine leaving behind the intact lesion on the nicked DNA. The chain is Bifunctional methyltransferase-like/endonuclease from Nanoarchaeum equitans (strain Kin4-M).